Consider the following 886-residue polypeptide: Microsomal triacylglycerol transfer protein (886 aa).

The N-terminal stretch at 1–27 (MENKNKKCLRTLLLLALFLGLLEDGKT) is a signal peptide. The Vitellogenin domain occupies 30 to 653 (IAPNSQQIFK…SQASSFKLGI (624 aa)). N-linked (GlcNAc...) asparagine glycosylation is found at Asn358, Asn484, Asn502, and Asn616.

It is found in the endoplasmic reticulum. Its subcellular location is the golgi apparatus. It carries out the reaction a 1,2-diacyl-sn-glycero-3-phosphocholine(in) = a 1,2-diacyl-sn-glycero-3-phosphocholine(out). The enzyme catalyses a 1,2-diacyl-sn-glycero-3-phosphoethanolamine(in) = a 1,2-diacyl-sn-glycero-3-phosphoethanolamine(out). Its function is as follows. Catalyzes the transport of phospholipids such as phosphatidylethanolamine (1,2-diacyl-sn-glycero-3-phosphoethanolamine) and phosphatidylcholine (1,2-diacyl-sn-glycero-3-phosphocholine) between membranes. Required for the assembly and secretion of plasma lipoproteins that contain apolipoprotein B. This chain is Microsomal triacylglycerol transfer protein, found in Drosophila melanogaster (Fruit fly).